Here is a 372-residue protein sequence, read N- to C-terminus: Isoliquiritigenin 2'-O-methyltransferase (372 aa).

5 residues coordinate S-adenosyl-L-methionine: glycine 217, aspartate 240, aspartate 260, methionine 261, and lysine 274. The active-site Proton acceptor is histidine 278.

The protein belongs to the class I-like SAM-binding methyltransferase superfamily. Cation-independent O-methyltransferase family. COMT subfamily. As to quaternary structure, monomer. Homodimer. As to expression, roots (at protein level). Expressed mainly in roots, and to a lesser extent in root nodules. In the roots, expression is not detected in the root tip or the cells immediately behind the tip, but is detected in tissues starting 1.5-2.0 mm distal to the root tip. Detected in the epidermal and cortical cells of 2 day old roots, with lower levels in vascular tissue.

It carries out the reaction isoliquiritigenin + S-adenosyl-L-methionine = 2'-O-methylisoliquiritigenin + S-adenosyl-L-homocysteine + H(+). The enzyme catalyses licodione + S-adenosyl-L-methionine = 2'-O-methyllicodione + S-adenosyl-L-homocysteine + H(+). With respect to regulation, inhibited by 1 mM Co(2+), Cu(2+), Zn(2+) or Fe(2+). Non-competitively inhibited by S-adenosyl-L-homocysteine. Competitively inhibited by 2'-O-methylisoliquiritigenin. Functionally, methylates the 2'-hydroxyl of isoliquiritigenin and licodione. Does not methylate narigenin chalcone, caffeic acid or daidzein. Involved in the root nodulation initiation by promoting the biosynthesis of nod-inducing molecules. This Medicago sativa (Alfalfa) protein is Isoliquiritigenin 2'-O-methyltransferase.